Reading from the N-terminus, the 400-residue chain is Imidazolonepropionase (400 aa).

Residues His-70 and His-72 each contribute to the Fe(3+) site. Positions 70 and 72 each coordinate Zn(2+). 3 residues coordinate 4-imidazolone-5-propanoate: Arg-79, Tyr-142, and His-175. Residue Tyr-142 participates in N-formimidoyl-L-glutamate binding. Position 239 (His-239) interacts with Fe(3+). Residue His-239 participates in Zn(2+) binding. Gln-242 provides a ligand contact to 4-imidazolone-5-propanoate. Asp-314 is a binding site for Fe(3+). Zn(2+) is bound at residue Asp-314. N-formimidoyl-L-glutamate-binding residues include Asn-316 and Gly-318. A 4-imidazolone-5-propanoate-binding site is contributed by Thr-319.

This sequence belongs to the metallo-dependent hydrolases superfamily. HutI family. It depends on Zn(2+) as a cofactor. Fe(3+) serves as cofactor.

It localises to the cytoplasm. It catalyses the reaction 4-imidazolone-5-propanoate + H2O = N-formimidoyl-L-glutamate. Its pathway is amino-acid degradation; L-histidine degradation into L-glutamate; N-formimidoyl-L-glutamate from L-histidine: step 3/3. In terms of biological role, catalyzes the hydrolytic cleavage of the carbon-nitrogen bond in imidazolone-5-propanoate to yield N-formimidoyl-L-glutamate. It is the third step in the universal histidine degradation pathway. This Methylobacterium sp. (strain 4-46) protein is Imidazolonepropionase.